A 227-amino-acid chain; its full sequence is MARGIFITATGTDIGKTYVTALIIKRLRETNINCGYYKAALSGAERRDGKLIAGDANYVYNIANIKGDPNDAVSYIFQQAVSPHLAAKLNNVEISMERIKKDFYSIKNKYDYITVEGSGGIVCPISTGKEKIMLDNIIKIFKLPAIVVADAGLGTINSTILTLQYMKEKNISVKMILLNNYNHEDIIHIENKRYLSDNLLIPVYTCNKNANKLEIPVEKLIEIYEEI.

13 to 18 lines the ATP pocket; sequence DIGKTY. Position 17 (threonine 17) interacts with Mg(2+). Lysine 38 is an active-site residue. Serine 42 serves as a coordination point for substrate. ATP contacts are provided by residues aspartate 55, 116–119, and 179–180; these read EGSG and NN. Mg(2+) contacts are provided by aspartate 55 and glutamate 116.

Belongs to the dethiobiotin synthetase family. Homodimer. Mg(2+) is required as a cofactor.

The protein localises to the cytoplasm. The enzyme catalyses (7R,8S)-7,8-diammoniononanoate + CO2 + ATP = (4R,5S)-dethiobiotin + ADP + phosphate + 3 H(+). It participates in cofactor biosynthesis; biotin biosynthesis; biotin from 7,8-diaminononanoate: step 1/2. Functionally, catalyzes a mechanistically unusual reaction, the ATP-dependent insertion of CO2 between the N7 and N8 nitrogen atoms of 7,8-diaminopelargonic acid (DAPA, also called 7,8-diammoniononanoate) to form a ureido ring. This Clostridium botulinum (strain Langeland / NCTC 10281 / Type F) protein is ATP-dependent dethiobiotin synthetase BioD.